We begin with the raw amino-acid sequence, 217 residues long: Cytochrome b5 domain-containing protein 1 (217 aa).

Positions 6–72 (PRYFTPREVS…NPKTGDVKTH (67 aa)) constitute a Cytochrome b5 heme-binding domain. Positions 41 and 72 each coordinate heme.

This sequence belongs to the cytochrome b5 family.

The protein resides in the cytoplasm. It is found in the cytoskeleton. The protein localises to the cilium axoneme. Functionally, radial spoke stalk protein that binds heme under oxidizing conditions. Required for the coordinated beating of multiple cilia maybe by functioning in a redox signaling pathway. The chain is Cytochrome b5 domain-containing protein 1 (cyb5d1) from Xenopus laevis (African clawed frog).